The sequence spans 301 residues: Recombination-associated protein RdgC (301 aa).

This sequence belongs to the RdgC family.

The protein resides in the cytoplasm. It is found in the nucleoid. In terms of biological role, may be involved in recombination. The protein is Recombination-associated protein RdgC of Xanthomonas oryzae pv. oryzae (strain MAFF 311018).